The chain runs to 941 residues: Heat shock protein 70 homolog (941 aa).

The segment at 851–887 is disordered; it reads ENQPDIPEDSEDSESEDDTTTSKDSESSEITENLALP. A compositionally biased stretch (acidic residues) spans 856–869; that stretch reads IPEDSEDSESEDDT.

Belongs to the heat shock protein 70 family.

Probable chaperone. In Acanthamoeba polyphaga (Amoeba), this protein is Heat shock protein 70 homolog.